Here is a 474-residue protein sequence, read N- to C-terminus: ATP synthase subunit beta (474 aa).

ATP is bound at residue Gly153 to Thr160.

This sequence belongs to the ATPase alpha/beta chains family. F-type ATPases have 2 components, CF(1) - the catalytic core - and CF(0) - the membrane proton channel. CF(1) has five subunits: alpha(3), beta(3), gamma(1), delta(1), epsilon(1). CF(0) has three main subunits: a(1), b(2) and c(9-12). The alpha and beta chains form an alternating ring which encloses part of the gamma chain. CF(1) is attached to CF(0) by a central stalk formed by the gamma and epsilon chains, while a peripheral stalk is formed by the delta and b chains.

It is found in the cell inner membrane. It catalyses the reaction ATP + H2O + 4 H(+)(in) = ADP + phosphate + 5 H(+)(out). In terms of biological role, produces ATP from ADP in the presence of a proton gradient across the membrane. The catalytic sites are hosted primarily by the beta subunits. The chain is ATP synthase subunit beta from Rickettsia typhi (strain ATCC VR-144 / Wilmington).